A 190-amino-acid polypeptide reads, in one-letter code: Putative hydrolase YdeN (190 aa).

Residues S71, D137, and H164 each act as charge relay system in the active site.

It belongs to the RBBP9 family.

The chain is Putative hydrolase YdeN (ydeN) from Bacillus subtilis (strain 168).